Here is a 105-residue protein sequence, read N- to C-terminus: Large ribosomal subunit protein uL24 (105 aa).

The protein belongs to the universal ribosomal protein uL24 family. As to quaternary structure, part of the 50S ribosomal subunit.

One of two assembly initiator proteins, it binds directly to the 5'-end of the 23S rRNA, where it nucleates assembly of the 50S subunit. Its function is as follows. One of the proteins that surrounds the polypeptide exit tunnel on the outside of the subunit. The polypeptide is Large ribosomal subunit protein uL24 (Xylella fastidiosa (strain M12)).